A 359-amino-acid polypeptide reads, in one-letter code: MEKKKIAVLFGGQSGEHEVSLMSAKSIINNLDKDKYEIYMVGITKKGEWYLYRGDVGKIETGEWEKEGIPAIMGASTKYRGIITFEDGENGFYPIDVVFPVLHGPNGEDGTIQGLLELLDMPYVGANVLSSALCMDKVFTKRIFKEAGLPTPDFVVVYGKEIEDLEAIKKKIEHLGYPCFVKPANLGSSVGITKVHNEEELPGALKLAAKYDRKLLIERGIDAREIECSVLGNENPEASIAGEIVPSNEFYDYNAKYFDGGKSLLLIPAPLPDEKMEEVRKLAIKAYKALDLRGMARVDFLMDRNTGTLYLNEVNTIPGFTKISMYPKLWESSGKSYSTLLDELINLAVESHNEKCREW.

Residues 141–346 (KRIFKEAGLP…YSTLLDELIN (206 aa)) form the ATP-grasp domain. ATP is bound at residue 172–227 (IEHLGYPCFVKPANLGSSVGITKVHNEEELPGALKLAAKYDRKLLIERGIDAREIE). Residues D299, E313, and N315 each coordinate Mg(2+).

This sequence belongs to the D-alanine--D-alanine ligase family. The cofactor is Mg(2+). Mn(2+) serves as cofactor.

It localises to the cytoplasm. It catalyses the reaction 2 D-alanine + ATP = D-alanyl-D-alanine + ADP + phosphate + H(+). It functions in the pathway cell wall biogenesis; peptidoglycan biosynthesis. Its function is as follows. Cell wall formation. This chain is D-alanine--D-alanine ligase, found in Thermoanaerobacter pseudethanolicus (strain ATCC 33223 / 39E) (Clostridium thermohydrosulfuricum).